The sequence spans 61 residues: Cytotoxin 3 (61 aa).

4 cysteine pairs are disulfide-bonded: Cys3–Cys22, Cys15–Cys39, Cys43–Cys54, and Cys55–Cys60.

Belongs to the three-finger toxin family. Short-chain subfamily. Type IB cytotoxin sub-subfamily. In terms of tissue distribution, expressed by the venom gland.

It is found in the secreted. In terms of biological role, this protein lyses red blood cells and has cardiotoxic and hypotensive activities. This Hemachatus haemachatus (Rinkhals) protein is Cytotoxin 3.